Here is a 478-residue protein sequence, read N- to C-terminus: BTB/POZ domain-containing protein 17 (478 aa).

A signal peptide spans methionine 1–alanine 28. N-linked (GlcNAc...) asparagine glycans are attached at residues asparagine 61, asparagine 100, asparagine 195, and asparagine 307. Residues serine 63–leucine 132 form the BTB domain. The BACK domain occupies alanine 169–glutamine 269.

The protein localises to the secreted. In Mus musculus (Mouse), this protein is BTB/POZ domain-containing protein 17 (Btbd17).